Here is a 90-residue protein sequence, read N- to C-terminus: Acylphosphatase (90 aa).

The region spanning 3 to 90 (AVTLKATGRV…QNYHDFRITN (88 aa)) is the Acylphosphatase-like domain. Residues R18 and N36 contribute to the active site.

It belongs to the acylphosphatase family.

The catalysed reaction is an acyl phosphate + H2O = a carboxylate + phosphate + H(+). This is Acylphosphatase (acyP) from Lactiplantibacillus plantarum (strain ATCC BAA-793 / NCIMB 8826 / WCFS1) (Lactobacillus plantarum).